The chain runs to 509 residues: Transmembrane protein 102 (509 aa).

Residues 1 to 312 (MASTVWGGAP…VLLATPEPPR (312 aa)) are Extracellular-facing. The segment at 167 to 236 (PPVPEESDMT…NPETPEPLET (70 aa)) is disordered. A compositionally biased stretch (basic and acidic residues) spans 174 to 204 (DMTHQTHSKESPTDRENSVDPSHDYVPEPEP). The segment covering 207–224 (SLQKSSSDLSESQSSYKD) has biased composition (low complexity). Residues 313 to 329 (HLLLFDLIPVVTVTGWP) form a helical membrane-spanning segment. The Cytoplasmic portion of the chain corresponds to 330–509 (DTARSHSWAG…GLAGVGGGTH (180 aa)).

Interacts with CSF2RB; this interaction occurs preferentially in the absence of CSF2.

It is found in the cell membrane. Selectively involved in CSF2 deprivation-induced apoptosis via a mitochondria-dependent pathway. The sequence is that of Transmembrane protein 102 (Tmem102) from Mus musculus (Mouse).